The chain runs to 447 residues: Tubulin beta chain (447 aa).

8 residues coordinate GTP: Gln11, Glu69, Ser138, Gly142, Thr143, Gly144, Asn204, and Asn226. Glu69 contacts Mg(2+). Residues 424-447 form a disordered region; it reads QYQEASVSEGEEEYDEEAPLEGEE. The span at 432–447 shows a compositional bias: acidic residues; that stretch reads EGEEEYDEEAPLEGEE.

It belongs to the tubulin family. In terms of assembly, dimer of alpha and beta chains. A typical microtubule is a hollow water-filled tube with an outer diameter of 25 nm and an inner diameter of 15 nM. Alpha-beta heterodimers associate head-to-tail to form protofilaments running lengthwise along the microtubule wall with the beta-tubulin subunit facing the microtubule plus end conferring a structural polarity. Microtubules usually have 13 protofilaments but different protofilament numbers can be found in some organisms and specialized cells. Requires Mg(2+) as cofactor.

Its subcellular location is the cytoplasm. The protein localises to the cytoskeleton. In terms of biological role, tubulin is the major constituent of microtubules, a cylinder consisting of laterally associated linear protofilaments composed of alpha- and beta-tubulin heterodimers. Microtubules grow by the addition of GTP-tubulin dimers to the microtubule end, where a stabilizing cap forms. Below the cap, tubulin dimers are in GDP-bound state, owing to GTPase activity of alpha-tubulin. The chain is Tubulin beta chain (TUB1) from Dothistroma septosporum (Red band needle blight fungus).